Here is a 347-residue protein sequence, read N- to C-terminus: Selenide, water dikinase (347 aa).

Residue cysteine 17 is part of the active site. Residues lysine 20 and 48–50 (TRD) contribute to the ATP site. Residue aspartate 51 participates in Mg(2+) binding. Residues aspartate 68, aspartate 91, and 139-141 (GHS) contribute to the ATP site. A Mg(2+)-binding site is contributed by aspartate 91. Aspartate 227 serves as a coordination point for Mg(2+).

It belongs to the selenophosphate synthase 1 family. Class I subfamily. Homodimer. Requires Mg(2+) as cofactor.

It carries out the reaction hydrogenselenide + ATP + H2O = selenophosphate + AMP + phosphate + 2 H(+). Its function is as follows. Synthesizes selenophosphate from selenide and ATP. The chain is Selenide, water dikinase from Escherichia coli O139:H28 (strain E24377A / ETEC).